Reading from the N-terminus, the 65-residue chain is Gallinacin-1 (65 aa).

The first 19 residues, Met1–Ala19, serve as a signal peptide directing secretion. Positions Gly20–Leu25 are excised as a propeptide. 3 cysteine pairs are disulfide-bonded: Cys31/Cys59, Cys38/Cys53, and Cys43/Cys60.

The protein belongs to the beta-defensin family. As to expression, strong expression in the bone marrow, lung, testis. Moderate expression in the bursa and intestine. Low expression in the cloaca, gall bladder, brain and pancreas. Expressed in the vagina, ovarian stroma and the theca and granulosa layers of the ovarian follicle.

It localises to the secreted. It is found in the cytoplasmic granule. In terms of biological role, has bactericidal activity. Potent activity against E.coli ML-35, L.monocytogenes EGD and C.albicans. This is Gallinacin-1 (GAL1) from Gallus gallus (Chicken).